An 839-amino-acid polypeptide reads, in one-letter code: MMSASRLAGTLIPAMAFLSCVRPESWEPCVEVVPNITYQCMELNFYKIPDNLPFSTKNLDLSFNPLRHLGSYSFFSFPELQVLDLSRCEIQTIEDGAYQSLSHLSTLILTGNPIQSLALGAFSGLSSLQKLVAVETNLASLENFPIGHLKTLKELNVAHNLIQSFKLPEYFSNLTNLEHLDLSSNKIQSIYCTDLRVLHQMPLLNLSLDLSLNPMNFIQPGAFKEIRLHKLTLRNNFDSLNVMKTCIQGLAGLEVHRLVLGEFRNEGNLEKFDKSALEGLCNLTIEEFRLAYLDYYLDDIIDLFNCLTNVSSFSLVSVTIKSVKDFSYNFGWQHLELVNCKFGQFPTLKLKSLKRLTFTSNKGGNAFSEVDLPSLEFLDLSRNGLSFKGCCSQSDFGTTSLKYLDLSFNGVITMSSNFLGLEQLEHLDFQHSNLKQMSEFSVFLSLRNLIYLDISHTHTRVAFNGIFNGLSSLEVLKMAGNSFQENFLPDIFTELRNLTFLDLSQCQLEQLSPTAFNSLSSLQVLNMSHNNFFSLDTFPYKCLNSLQVLDYSLNHIMTSKKQELQHFPSSLAFLNLTQNDFACTCEHQSFLQWIKDQRQLLVEVERMECATPSDKQGMPVLSLNITCQMNKTIIGVSVLSVLVVSVVAVLVYKFYFHLMLLAGCIKYGRGENIYDAFVIYSSQDEDWVRNELVKNLEEGVPPFQLCLHYRDFIPGVAIAANIIHEGFHKSRKVIVVVSQHFIQSRWCIFEYEIAQTWQFLSSRAGIIFIVLQKVEKTLLRRQVELYRLLSRNTYLEWEDSVLGRHIFWRRLRKALLDGKSWNPEGTVGTGCNWQEATSI.

An N-terminal signal peptide occupies residues 1 to 23; sequence MMSASRLAGTLIPAMAFLSCVRP. Residues 24 to 631 lie on the Extracellular side of the membrane; the sequence is ESWEPCVEVV…SLNITCQMNK (608 aa). Residues Cys29 and Cys40 are joined by a disulfide bond. N-linked (GlcNAc...) asparagine glycosylation occurs at Asn35. LRR repeat units follow at residues 55–76, 79–100, 103–124, 127–148, and 151–172; these read STKN…SFFS, ELQV…AYQS, HLST…AFSG, SLQK…PIGH, and TLKE…EYFS. The N-linked (GlcNAc...) asparagine glycan is linked to Asn173. LRR repeat units lie at residues 176–199, 205–225, and 227–247; these read NLEH…RVLH, NLSL…AFKE, and RLHK…KTCI. N-linked (GlcNAc...) asparagine glycosylation is present at Asn205. Cys281 and Cys306 are oxidised to a cystine. Residues Asn282 and Asn309 are each glycosylated (N-linked (GlcNAc...) asparagine). LRR repeat units lie at residues 331 to 351, 352 to 373, 374 to 394, 400 to 422, 423 to 444, 448 to 456, 472 to 495, 497 to 518, 521 to 542, and 545 to 565; these read GWQH…LKLK, SLKR…VDLP, SLEF…CSQS, SLKY…LGLE, QLEH…SVFL, NLIYLDISH, SLEV…FTEL, NLTF…AFNS, SLQV…PYKC, and SLQV…QELQ. A disulfide bridge links Cys390 with Cys391. N-linked (GlcNAc...) asparagine glycosylation is found at Asn497 and Asn526. Asn575 is a glycosylation site (N-linked (GlcNAc...) asparagine). The 51-residue stretch at 579–629 folds into the LRRCT domain; the sequence is NDFACTCEHQSFLQWIKDQRQLLVEVERMECATPSDKQGMPVLSLNITCQM. Intrachain disulfides connect Cys583-Cys609 and Cys585-Cys627. N-linked (GlcNAc...) asparagine glycans are attached at residues Asn624 and Asn630. A helical membrane pass occupies residues 632–652; the sequence is TIIGVSVLSVLVVSVVAVLVY. Residues 653–839 are Cytoplasmic-facing; it reads KFYFHLMLLA…GCNWQEATSI (187 aa). In terms of domain architecture, TIR spans 672-815; that stretch reads NIYDAFVIYS…IFWRRLRKAL (144 aa).

Belongs to the Toll-like receptor family. As to quaternary structure, belongs to the lipopolysaccharide (LPS) receptor, a multi-protein complex containing at least CD14, LY96 and TLR4. Binding to bacterial LPS leads to homodimerization. Interacts with LY96 via the extracellular domain. Interacts with MYD88 and TIRAP via their respective TIR domains. Interacts with NOX4. Interacts with CNPY3 and HSP90B1; this interaction is required for proper folding in the endoplasmic reticulum. Interacts with MAP3K21; this interaction leads to negative regulation of TLR4 signaling. Interacts with CD36, following CD36 stimulation by oxLDL or amyloid-beta 42, and forms a heterodimer with TLR6. The trimeric complex is internalized and triggers inflammatory response. LYN kinase activity facilitates TLR4-TLR6 heterodimerization and signal initiation. Interacts with TICAM1 in response to LPS in a WDFY1-dependent manner. Interacts with WDFY1 in response to LPS. Interacts with SMPDL3B. Interacts with CEACAM1; upon lipopolysaccharide stimulation, forms a complex including TLR4 and the phosphorylated form of SYK and CEACAM1, which in turn, recruits PTPN6 that dephosphorylates SYK, reducing the production of reactive oxygen species (ROS) and lysosome disruption, which in turn, reduces the activity of the inflammasome. Interacts with RFTN1; the interaction occurs in response to lipopolysaccharide stimulation. Interacts with SCIMP; the interaction occurs in response to lipopolysaccharide stimulation and is enhanced by phosphorylation of SCIMP by LYN. This interaction facilitates the phosphorylation of TLR4 by LYN which elicits a selective cytokine response in macrophages. Interacts with TRAF3IP3. Interacts with TREM1; this interaction enhances TLR4-mediated inflammatory response. Interacts with ZG16B/PAUF. Interacts with CD82; this interaction inhibits TLR4-mediated signaling pathway. In terms of processing, phosphorylated on tyrosine residues by LYN after binding lipopolysaccharide. Post-translationally, ubiquitinated by RNF128 via 'Lys-28'-linked polyubiquitin chains, leading to proteasomal degradation.

It is found in the cell membrane. The protein localises to the early endosome. It localises to the cell projection. The protein resides in the ruffle. Functionally, transmembrane receptor that functions as a pattern recognition receptor recognizing pathogen- and damage-associated molecular patterns (PAMPs and DAMPs) to induce innate immune responses via downstream signaling pathways. At the plasma membrane, cooperates with LY96 to mediate the innate immune response to bacterial lipopolysaccharide (LPS). Also involved in LPS-independent inflammatory responses triggered by free fatty acids, such as palmitate, and Ni(2+). Mechanistically, acts via MYD88, TIRAP and TRAF6, leading to NF-kappa-B activation, cytokine secretion and the inflammatory response. Alternatively, CD14-mediated TLR4 internalization via endocytosis is associated with the initiation of a MYD88-independent signaling via the TICAM1-TBK1-IRF3 axis leading to type I interferon production. In addition to the secretion of proinflammatory cytokines, initiates the activation of NLRP3 inflammasome and formation of a positive feedback loop between autophagy and NF-kappa-B signaling cascade. In complex with TLR6, promotes inflammation in monocytes/macrophages by associating with TLR6 and the receptor CD86. Upon ligand binding, such as oxLDL or amyloid-beta 42, the TLR4:TLR6 complex is internalized and triggers inflammatory response, leading to NF-kappa-B-dependent production of CXCL1, CXCL2 and CCL9 cytokines, via MYD88 signaling pathway, and CCL5 cytokine, via TICAM1 signaling pathway. In myeloid dendritic cells, vesicular stomatitis virus glycoprotein G but not LPS promotes the activation of IRF7, leading to type I IFN production in a CD14-dependent manner. The sequence is that of Toll-like receptor 4 (TLR4) from Pan paniscus (Pygmy chimpanzee).